Consider the following 367-residue polypeptide: UDP-N-acetylglucosamine--N-acetylmuramyl-(pentapeptide) pyrophosphoryl-undecaprenol N-acetylglucosamine transferase (367 aa).

UDP-N-acetyl-alpha-D-glucosamine is bound by residues 22–24, Asn-134, Arg-170, Ser-198, Ile-253, and Gln-298; that span reads TGG.

It belongs to the glycosyltransferase 28 family. MurG subfamily.

It is found in the cell inner membrane. It carries out the reaction di-trans,octa-cis-undecaprenyl diphospho-N-acetyl-alpha-D-muramoyl-L-alanyl-D-glutamyl-meso-2,6-diaminopimeloyl-D-alanyl-D-alanine + UDP-N-acetyl-alpha-D-glucosamine = di-trans,octa-cis-undecaprenyl diphospho-[N-acetyl-alpha-D-glucosaminyl-(1-&gt;4)]-N-acetyl-alpha-D-muramoyl-L-alanyl-D-glutamyl-meso-2,6-diaminopimeloyl-D-alanyl-D-alanine + UDP + H(+). It functions in the pathway cell wall biogenesis; peptidoglycan biosynthesis. Its function is as follows. Cell wall formation. Catalyzes the transfer of a GlcNAc subunit on undecaprenyl-pyrophosphoryl-MurNAc-pentapeptide (lipid intermediate I) to form undecaprenyl-pyrophosphoryl-MurNAc-(pentapeptide)GlcNAc (lipid intermediate II). The polypeptide is UDP-N-acetylglucosamine--N-acetylmuramyl-(pentapeptide) pyrophosphoryl-undecaprenol N-acetylglucosamine transferase (Xylella fastidiosa (strain M23)).